A 186-amino-acid polypeptide reads, in one-letter code: Ribosome-recycling factor (186 aa).

This sequence belongs to the RRF family.

It is found in the cytoplasm. Functionally, responsible for the release of ribosomes from messenger RNA at the termination of protein biosynthesis. May increase the efficiency of translation by recycling ribosomes from one round of translation to another. The sequence is that of Ribosome-recycling factor from Paracidovorax citrulli (strain AAC00-1) (Acidovorax citrulli).